Consider the following 275-residue polypeptide: 4-diphosphocytidyl-2-C-methyl-D-erythritol kinase (275 aa).

Lysine 14 is an active-site residue. 94 to 104 (PMEAGLGGGSA) contributes to the ATP binding site. The active site involves aspartate 134.

This sequence belongs to the GHMP kinase family. IspE subfamily.

The enzyme catalyses 4-CDP-2-C-methyl-D-erythritol + ATP = 4-CDP-2-C-methyl-D-erythritol 2-phosphate + ADP + H(+). It functions in the pathway isoprenoid biosynthesis; isopentenyl diphosphate biosynthesis via DXP pathway; isopentenyl diphosphate from 1-deoxy-D-xylulose 5-phosphate: step 3/6. In terms of biological role, catalyzes the phosphorylation of the position 2 hydroxy group of 4-diphosphocytidyl-2C-methyl-D-erythritol. The sequence is that of 4-diphosphocytidyl-2-C-methyl-D-erythritol kinase from Thermosipho africanus (strain TCF52B).